Reading from the N-terminus, the 418-residue chain is Tyrosine--tRNA ligase 1 (418 aa).

Residue Y34 participates in L-tyrosine binding. The 'HIGH' region motif lies at 39 to 48; it reads PTADSLHLGH. The L-tyrosine site is built by Y169 and Q173. The short motif at 229-233 is the 'KMSKS' region element; that stretch reads KFGKS. K232 is a binding site for ATP. The S4 RNA-binding domain maps to 352-418; that stretch reads LNIVELLVNA…GKKKNFVLTY (67 aa).

Belongs to the class-I aminoacyl-tRNA synthetase family. TyrS type 1 subfamily. Homodimer.

It is found in the cytoplasm. It carries out the reaction tRNA(Tyr) + L-tyrosine + ATP = L-tyrosyl-tRNA(Tyr) + AMP + diphosphate + H(+). In terms of biological role, catalyzes the attachment of tyrosine to tRNA(Tyr) in a two-step reaction: tyrosine is first activated by ATP to form Tyr-AMP and then transferred to the acceptor end of tRNA(Tyr). The sequence is that of Tyrosine--tRNA ligase 1 from Streptococcus thermophilus (strain CNRZ 1066).